The chain runs to 422 residues: Dihydrofolate synthase/folylpolyglutamate synthase (422 aa).

7,8-dihydropteroate is bound at residue 29–31 (DLG). 59-62 (GKGT) contributes to the ATP binding site. S83 is a binding site for Mg(2+). Residue 122 to 125 (TYFE) coordinates 7,8-dihydropteroate. Residue E146 participates in Mg(2+) binding. Residue 153 to 155 (LDA) participates in 7,8-dihydropteroate binding. Position 173 (H173) interacts with Mg(2+). Position 188 is an N6-carboxylysine (K188). Residues N257, R289, and D302 each coordinate ATP.

It belongs to the folylpolyglutamate synthase family. Monomer. The cofactor is Mg(2+).

It carries out the reaction 7,8-dihydropteroate + L-glutamate + ATP = 7,8-dihydrofolate + ADP + phosphate + H(+). The catalysed reaction is (6S)-5,6,7,8-tetrahydrofolyl-(gamma-L-Glu)(n) + L-glutamate + ATP = (6S)-5,6,7,8-tetrahydrofolyl-(gamma-L-Glu)(n+1) + ADP + phosphate + H(+). The enzyme catalyses 10-formyltetrahydrofolyl-(gamma-L-Glu)(n) + L-glutamate + ATP = 10-formyltetrahydrofolyl-(gamma-L-Glu)(n+1) + ADP + phosphate + H(+). It catalyses the reaction (6R)-5,10-methylenetetrahydrofolyl-(gamma-L-Glu)(n) + L-glutamate + ATP = (6R)-5,10-methylenetetrahydrofolyl-(gamma-L-Glu)(n+1) + ADP + phosphate + H(+). Its pathway is cofactor biosynthesis; tetrahydrofolate biosynthesis; 7,8-dihydrofolate from 2-amino-4-hydroxy-6-hydroxymethyl-7,8-dihydropteridine diphosphate and 4-aminobenzoate: step 2/2. The protein operates within cofactor biosynthesis; tetrahydrofolylpolyglutamate biosynthesis. Functionally, functions in two distinct reactions of the de novo folate biosynthetic pathway. Catalyzes the addition of a glutamate residue to dihydropteroate (7,8-dihydropteroate or H2Pte) to form dihydrofolate (7,8-dihydrofolate monoglutamate or H2Pte-Glu). Also catalyzes successive additions of L-glutamate to tetrahydrofolate or 10-formyltetrahydrofolate or 5,10-methylenetetrahydrofolate, leading to folylpolyglutamate derivatives. This Escherichia coli (strain K12) protein is Dihydrofolate synthase/folylpolyglutamate synthase.